The primary structure comprises 671 residues: Annexin A6 (671 aa).

Annexin repeat units lie at residues 18-89 (FNAS…SLMR), 90-161 (PPAY…VLLQ), 173-245 (DLVE…AVVK), 249-320 (STAE…KLCE), 361-432 (FNDD…GLML), 433-504 (TPAQ…SLAL), 519-594 (EDAK…AIVR), and 598-669 (NKPA…LCGG).

It belongs to the annexin family.

It is found in the cytoplasm. The protein localises to the melanosome. Its function is as follows. May associate with CD21. May regulate the release of Ca(2+) from intracellular stores. This Gallus gallus (Chicken) protein is Annexin A6 (ANXA6).